The sequence spans 209 residues: MMFPSRPMLCVITDEELPPVTFARQALWGGATILQLRNKTASGRDLCRWSEAILPLTRQHNALFIVNDRLDIALATGADGVHLGQDDLPATVARKLLGPDRIIGVSTGTREEALQAEKEGADYVGFGHIFPTGSKDKPLPPVGTLALQDTASLLSIPLIAIGGIQLENARRVISCGASGIAVISAVSRHPDPRIAAEALVREMEEGMLL.

4-amino-2-methyl-5-(diphosphooxymethyl)pyrimidine-binding positions include 35-39 and Asn-67; that span reads QLRNK. Mg(2+)-binding residues include Asp-68 and Asp-87. Position 106 (Ser-106) interacts with 4-amino-2-methyl-5-(diphosphooxymethyl)pyrimidine. 132–134 is a binding site for 2-[(2R,5Z)-2-carboxy-4-methylthiazol-5(2H)-ylidene]ethyl phosphate; sequence TGS. Lys-135 contacts 4-amino-2-methyl-5-(diphosphooxymethyl)pyrimidine. 2-[(2R,5Z)-2-carboxy-4-methylthiazol-5(2H)-ylidene]ethyl phosphate contacts are provided by residues Gly-163 and 183 to 184; that span reads IS.

The protein belongs to the thiamine-phosphate synthase family. Requires Mg(2+) as cofactor.

It catalyses the reaction 2-[(2R,5Z)-2-carboxy-4-methylthiazol-5(2H)-ylidene]ethyl phosphate + 4-amino-2-methyl-5-(diphosphooxymethyl)pyrimidine + 2 H(+) = thiamine phosphate + CO2 + diphosphate. The catalysed reaction is 2-(2-carboxy-4-methylthiazol-5-yl)ethyl phosphate + 4-amino-2-methyl-5-(diphosphooxymethyl)pyrimidine + 2 H(+) = thiamine phosphate + CO2 + diphosphate. The enzyme catalyses 4-methyl-5-(2-phosphooxyethyl)-thiazole + 4-amino-2-methyl-5-(diphosphooxymethyl)pyrimidine + H(+) = thiamine phosphate + diphosphate. It functions in the pathway cofactor biosynthesis; thiamine diphosphate biosynthesis; thiamine phosphate from 4-amino-2-methyl-5-diphosphomethylpyrimidine and 4-methyl-5-(2-phosphoethyl)-thiazole: step 1/1. Its function is as follows. Condenses 4-methyl-5-(beta-hydroxyethyl)thiazole monophosphate (THZ-P) and 2-methyl-4-amino-5-hydroxymethyl pyrimidine pyrophosphate (HMP-PP) to form thiamine monophosphate (TMP). The sequence is that of Thiamine-phosphate synthase from Chlorobium phaeovibrioides (strain DSM 265 / 1930) (Prosthecochloris vibrioformis (strain DSM 265)).